We begin with the raw amino-acid sequence, 373 residues long: Chaperone protein DnaJ (373 aa).

The region spanning 4 to 68 (NYYQILGVSK…QTRAAYDRLG (65 aa)) is the J domain. The segment at 136-214 (GIEKNISFSS…CHGMGRYHKQ (79 aa)) adopts a CR-type zinc-finger fold. C149, C152, C166, C169, C188, C191, C202, and C205 together coordinate Zn(2+). 4 CXXCXGXG motif repeats span residues 149 to 156 (CDTCHGSG), 166 to 173 (CDACSGVG), 188 to 195 (CHKCQGNG), and 202 to 209 (CKKCHGMG).

The protein belongs to the DnaJ family. As to quaternary structure, homodimer. Zn(2+) serves as cofactor.

The protein localises to the cytoplasm. Functionally, participates actively in the response to hyperosmotic and heat shock by preventing the aggregation of stress-denatured proteins and by disaggregating proteins, also in an autonomous, DnaK-independent fashion. Unfolded proteins bind initially to DnaJ; upon interaction with the DnaJ-bound protein, DnaK hydrolyzes its bound ATP, resulting in the formation of a stable complex. GrpE releases ADP from DnaK; ATP binding to DnaK triggers the release of the substrate protein, thus completing the reaction cycle. Several rounds of ATP-dependent interactions between DnaJ, DnaK and GrpE are required for fully efficient folding. Also involved, together with DnaK and GrpE, in the DNA replication of plasmids through activation of initiation proteins. The sequence is that of Chaperone protein DnaJ from Rickettsia peacockii (strain Rustic).